The following is a 684-amino-acid chain: Signal peptide peptidase-like 2C (684 aa).

A signal peptide spans 1–21; sequence MACLGFLLPVGFLLLISTVAG. The Lumenal portion of the chain corresponds to 22 to 186; the sequence is GKYGVAHVVS…APPEPIIDYN (165 aa). The 81-residue stretch at 83–163 folds into the PA domain; that stretch reads SPSQRPLRQT…HYADMLDILS (81 aa). The N-linked (GlcNAc...) asparagine glycan is linked to N100. The chain crosses the membrane as a helical span at residues 187-207; it reads MLVIFILAVGTVAAGGYWAGL. Over 208–253 the chain is Cytoplasmic; the sequence is TEANRLQRRRARRGGGSGGHHQLQEAAAAEGAQKEDNEDIPVDFTP. The interval 216–242 is disordered; that stretch reads RRARRGGGSGGHHQLQEAAAAEGAQKE. Positions 227-238 are enriched in low complexity; sequence HHQLQEAAAAEG. A helical transmembrane segment spans residues 254–274; that stretch reads AMTGVVVTLSCSLMLLLYFFY. Residues 275–276 are Lumenal-facing; sequence DH. A helical transmembrane segment spans residues 277–297; it reads FVYVTIGIFGLGAGIGLYSCL. Residues 298–319 are Cytoplasmic-facing; it reads SPLVCRLSLRQYQRPPHSLWAS. Residues 320-340 form a helical membrane-spanning segment; that stretch reads LPLPLLLLASLCATVIIFWVA. Residues 341–346 lie on the Lumenal side of the membrane; the sequence is YRNEDR. Residues 347-365 traverse the membrane as a helical segment; that stretch reads WAWLLQDTLGISYCLFVLH. Residues 366 to 376 are Cytoplasmic-facing; that stretch reads RVRLPTLKNCS. The helical transmembrane segment at 377 to 397 threads the bilayer; the sequence is SFLLALLAFDVFFVFVTPFFT. D386 is a catalytic residue. The Lumenal portion of the chain corresponds to 398–439; the sequence is KTGESIMAQVALGPAESSSHERLPMVLKVPRLRVSALTLCSQ. A helical transmembrane segment spans residues 440–460; it reads PFSILGFGDIVVPGFLVAYCC. D448 is a catalytic residue. Residues 461-472 are Cytoplasmic-facing; that stretch reads RFDVQVCSRQIY. A helical membrane pass occupies residues 473–493; sequence FVACTVAYAVGLLVTFMAMVL. Residues 494–495 lie on the Lumenal side of the membrane; sequence MQ. A helical membrane pass occupies residues 496 to 516; the sequence is MGQPALLYLVSSTLLTSLAVA. The PAL signature appears at 499–501; sequence PAL. Residues 517–684 lie on the Cytoplasmic side of the membrane; that stretch reads ACRQELSLFW…RKSMSTQAPL (168 aa). The disordered stretch occupies residues 548–614; sequence KQEGAADAHT…SDAHLDPNEL (67 aa). The segment covering 582-592 has biased composition (polar residues); the sequence is EIVTISENEAT. Over residues 594–611 the composition is skewed to basic and acidic residues; the sequence is PEDRSDSSEGWSDAHLDP.

Belongs to the peptidase A22B family. As to quaternary structure, interacts (via active sites) with FREY; the interaction stabilizes FREY1 protein and inhibits SPPL2C proteolytic activity. Post-translationally, glycosylated. As to expression, highly expressed in testis where it is primarily localised in spermatids (at protein level).

It is found in the endoplasmic reticulum membrane. In terms of biological role, sperm-specific intramembrane-cleaving aspartic protease (I-CLiP) that cleaves distinct tail-anchored proteins and SNARE proteins. In elongated spermatids, modulates intracellular Ca(2+) homeostasis by controlling PLN abundance through proteolytic cleavage. During spermatogenesis, processes SNARE proteins and impacts vesicular trafficking which supports compartmental reorganization in maturating spermatids and may play a role in formation of the acrosome. Its function is as follows. In round spermatids, acts as a scaffold protein supporting FREY1 in IZUMO1 recruitment at the endoplasmic reticulum membrane and coordination of IZUMO1 complex assembly. Stabilizes FREY1 at the endoplasmic reticulum membrane through interaction. May recruit IZUMO1 interaction partners. This is Signal peptide peptidase-like 2C from Homo sapiens (Human).